The primary structure comprises 336 residues: Holliday junction branch migration complex subunit RuvB (336 aa).

The tract at residues 1-183 (MTEEHLTSQE…FGIVEHMQYY (183 aa)) is large ATPase domain (RuvB-L). ATP is bound by residues L22, R23, G64, K67, T68, T69, 130-132 (EDF), R173, Y183, and R220. Residue T68 participates in Mg(2+) binding. The interval 184–254 (QVEDLEKIIL…TTAMALKQLQ (71 aa)) is small ATPAse domain (RuvB-S). The tract at residues 257–336 (SAGLDQTDRK…LNLPLPGEEE (80 aa)) is head domain (RuvB-H). Residues R293 and R317 each coordinate DNA.

It belongs to the RuvB family. As to quaternary structure, homohexamer. Forms an RuvA(8)-RuvB(12)-Holliday junction (HJ) complex. HJ DNA is sandwiched between 2 RuvA tetramers; dsDNA enters through RuvA and exits via RuvB. An RuvB hexamer assembles on each DNA strand where it exits the tetramer. Each RuvB hexamer is contacted by two RuvA subunits (via domain III) on 2 adjacent RuvB subunits; this complex drives branch migration. In the full resolvosome a probable DNA-RuvA(4)-RuvB(12)-RuvC(2) complex forms which resolves the HJ.

The protein localises to the cytoplasm. The enzyme catalyses ATP + H2O = ADP + phosphate + H(+). Its function is as follows. The RuvA-RuvB-RuvC complex processes Holliday junction (HJ) DNA during genetic recombination and DNA repair, while the RuvA-RuvB complex plays an important role in the rescue of blocked DNA replication forks via replication fork reversal (RFR). RuvA specifically binds to HJ cruciform DNA, conferring on it an open structure. The RuvB hexamer acts as an ATP-dependent pump, pulling dsDNA into and through the RuvAB complex. RuvB forms 2 homohexamers on either side of HJ DNA bound by 1 or 2 RuvA tetramers; 4 subunits per hexamer contact DNA at a time. Coordinated motions by a converter formed by DNA-disengaged RuvB subunits stimulates ATP hydrolysis and nucleotide exchange. Immobilization of the converter enables RuvB to convert the ATP-contained energy into a lever motion, pulling 2 nucleotides of DNA out of the RuvA tetramer per ATP hydrolyzed, thus driving DNA branch migration. The RuvB motors rotate together with the DNA substrate, which together with the progressing nucleotide cycle form the mechanistic basis for DNA recombination by continuous HJ branch migration. Branch migration allows RuvC to scan DNA until it finds its consensus sequence, where it cleaves and resolves cruciform DNA. In Lactobacillus delbrueckii subsp. bulgaricus (strain ATCC 11842 / DSM 20081 / BCRC 10696 / JCM 1002 / NBRC 13953 / NCIMB 11778 / NCTC 12712 / WDCM 00102 / Lb 14), this protein is Holliday junction branch migration complex subunit RuvB.